Here is a 314-residue protein sequence, read N- to C-terminus: N-alpha-acetyltransferase 80 (314 aa).

In terms of domain architecture, N-acetyltransferase spans 90–243 (LEPVHCRPEL…TTVLRAFSKP (154 aa)). Residues arginine 113 and 118 to 121 (RLHS) each bind substrate. Acetyl-CoA contacts are provided by residues 169–171 (VVV), 177–182 (GRGFGR), and glutamine 207. The interval 260–295 (VPRSSKGPPLPPPPPLPQSLTASPPPSPEPLPQSPL) is disordered. A compositionally biased stretch (pro residues) spans 267–292 (PPLPPPPPLPQSLTASPPPSPEPLPQ).

Belongs to the acetyltransferase family.

It localises to the cytoplasm. The protein resides in the cytosol. The enzyme catalyses N-terminal L-aspartyl-L-aspartyl-L-aspartyl-[protein] + acetyl-CoA = N-terminal N-acetyl-L-aspartyl-L-aspartyl-L-aspartyl-[protein] + CoA + H(+). The catalysed reaction is N-terminal L-glutamyl-L-glutamyl-L-glutamyl-[protein] + acetyl-CoA = N-terminal N-acetyl-L-glutamyl-L-glutamyl-L-glutamyl-[protein] + CoA + H(+). Functionally, N-alpha-acetyltransferase that specifically mediates the acetylation of the acidic amino terminus of processed forms of beta- and gamma-actin (ACTB and ACTG, respectively). N-terminal acetylation of processed beta- and gamma-actin regulates actin filament depolymerization and elongation. In vivo, preferentially displays N-terminal acetyltransferase activity towards acid N-terminal sequences starting with Asp-Asp-Asp and Glu-Glu-Glu. In vitro, shows high activity towards Met-Asp-Glu-Leu and Met-Asp-Asp-Asp. May act as a tumor suppressor. The chain is N-alpha-acetyltransferase 80 from Mus musculus (Mouse).